Here is a 260-residue protein sequence, read N- to C-terminus: Imidazole glycerol phosphate synthase subunit HisF (260 aa).

Residues Asp11 and Asp130 contribute to the active site.

Belongs to the HisA/HisF family. Heterodimer of HisH and HisF.

It localises to the cytoplasm. The enzyme catalyses 5-[(5-phospho-1-deoxy-D-ribulos-1-ylimino)methylamino]-1-(5-phospho-beta-D-ribosyl)imidazole-4-carboxamide + L-glutamine = D-erythro-1-(imidazol-4-yl)glycerol 3-phosphate + 5-amino-1-(5-phospho-beta-D-ribosyl)imidazole-4-carboxamide + L-glutamate + H(+). It functions in the pathway amino-acid biosynthesis; L-histidine biosynthesis; L-histidine from 5-phospho-alpha-D-ribose 1-diphosphate: step 5/9. IGPS catalyzes the conversion of PRFAR and glutamine to IGP, AICAR and glutamate. The HisF subunit catalyzes the cyclization activity that produces IGP and AICAR from PRFAR using the ammonia provided by the HisH subunit. This Psychrobacter arcticus (strain DSM 17307 / VKM B-2377 / 273-4) protein is Imidazole glycerol phosphate synthase subunit HisF.